A 124-amino-acid chain; its full sequence is Small ribosomal subunit protein eS6 (124 aa).

Belongs to the eukaryotic ribosomal protein eS6 family.

This Thermoplasma acidophilum (strain ATCC 25905 / DSM 1728 / JCM 9062 / NBRC 15155 / AMRC-C165) protein is Small ribosomal subunit protein eS6.